A 344-amino-acid polypeptide reads, in one-letter code: Exopolyphosphatase 1 (344 aa).

A disordered region spans residues 319 to 344; sequence VHTSVRAVGGQPADRNAANRSRGSKP.

Belongs to the GppA/Ppx family. As to quaternary structure, homodimer.

It catalyses the reaction [phosphate](n) + H2O = [phosphate](n-1) + phosphate + H(+). Its function is as follows. Degradation of inorganic polyphosphates (polyP). Releases orthophosphate processively from the ends of the polyP chain. The polypeptide is Exopolyphosphatase 1 (Mycobacterium bovis (strain ATCC BAA-935 / AF2122/97)).